Reading from the N-terminus, the 315-residue chain is Olfactory receptor 3A2 (315 aa).

At 1 to 29 (MEPEAGTNRTAVAEFILLGLVQTEEMQPV) the chain is on the extracellular side. Residue Asn8 is glycosylated (N-linked (GlcNAc...) asparagine). The chain crosses the membrane as a helical span at residues 30–52 (VFVLFLFAYLVTIGGNLSILAAI). The Cytoplasmic segment spans residues 53-60 (LVEPKLHA). Residues 61 to 82 (PMYFFLGNLSVLDVGCITVTVP) form a helical membrane-spanning segment. Residues 83 to 103 (AMLGRLLSHKSTISYDACLSQ) are Extracellular-facing. A disulfide bridge connects residues Cys100 and Cys192. Residues 104–123 (LFFFHLLAGMDCFLLTAMAY) form a helical membrane-spanning segment. Residues 124–143 (DRFLAICWPLTYSTRMSQTV) lie on the Cytoplasmic side of the membrane. The helical transmembrane segment at 144 to 161 (QRMLVAASWACAFTNALT) threads the bilayer. At 162–199 (HTVAMSTLNFCGPNEVNHFYCDLPQLFQLSCSSTQLNE) the chain is on the extracellular side. Residues 200 to 223 (LLLFAVGFIMAGTPLVLIITSYSH) traverse the membrane as a helical segment. Residues 224–240 (VAAAVLRIRSVEGWKKA) lie on the Cytoplasmic side of the membrane. The chain crosses the membrane as a helical span at residues 241-264 (FSTCGSHLTVVCLFFGTGIFNYMR). Residues 265-275 (LGSEEASDKDK) lie on the Extracellular side of the membrane. Residues 276–295 (GVGVFNTVINPMLNPLIYSL) traverse the membrane as a helical segment. Residues 296-315 (RNPDVQGALWRIFLGRRSLT) are Cytoplasmic-facing.

Belongs to the G-protein coupled receptor 1 family.

It localises to the cell membrane. Its function is as follows. Odorant receptor. This chain is Olfactory receptor 3A2 (OR3A2), found in Pan troglodytes (Chimpanzee).